A 317-amino-acid polypeptide reads, in one-letter code: Apolipoprotein E (317 aa).

The first 18 residues, 1-18 (MKVLWAALLVTFLAGCQA), serve as a signal peptide directing secretion. 8 tandem repeats follow at residues 80 to 101 (ALMDETMKELKAYRSELEEQLT), 102 to 123 (PVAEETRARLSKELQAAQARLG), 124 to 145 (ADMEDVRGRLVQYRGEVQAMLG), 146 to 167 (QSTEELRARLASHLRKLRKRLL), 168 to 189 (RDADDLQKRLAVYQAGAREGAE), 190 to 211 (RGVSAIRERLGPLVEQGRVRAA), 212 to 233 (TVGSLAGQPLQERAQAWGERLR), and 234 to 255 (ARMEEVGGRTRDRLDEVKEQVA). The 8 X 22 AA approximate tandem repeats stretch occupies residues 80–255 (ALMDETMKEL…RLDEVKEQVA (176 aa)). Methionine sulfoxide is present on Met143. Phosphoserine is present on Ser147. The interval 158–168 (HLRKLRKRLLR) is LDL and other lipoprotein receptors binding. 162–165 (LRKR) contributes to the heparin binding site. The lipid-binding and lipoprotein association stretch occupies residues 210–290 (AATVGSLAGQ…SWFEPLVEDM (81 aa)). 229–236 (GERLRARM) lines the heparin pocket. A homooligomerization region spans residues 266 to 317 (QQIRLQAEAFQARLKSWFEPLVEDMQRQWAGLVEKVQAAVGTSAAPVPSDNH). The specificity for association with VLDL stretch occupies residues 278–290 (RLKSWFEPLVEDM).

The protein belongs to the apolipoprotein A1/A4/E family. Homotetramer. May interact with ABCA1; functionally associated with ABCA1 in the biogenesis of HDLs. May interact with APP/A4 amyloid-beta peptide; the interaction is extremely stable in vitro but its physiological significance is unclear. May interact with MAPT. May interact with MAP2. In the cerebrospinal fluid, interacts with secreted SORL1. Interacts with PMEL; this allows the loading of PMEL luminal fragment on ILVs to induce fibril nucleation. APOE exists as multiple glycosylated and sialylated glycoforms within cells and in plasma. The extent of glycosylation and sialylation are tissue and context specific. Post-translationally, glycated in plasma VLDL. In terms of processing, phosphorylated by FAM20C in the extracellular medium.

The protein localises to the secreted. Its subcellular location is the extracellular space. It is found in the extracellular matrix. It localises to the extracellular vesicle. The protein resides in the endosome. The protein localises to the multivesicular body. In terms of biological role, APOE is an apolipoprotein, a protein associating with lipid particles, that mainly functions in lipoprotein-mediated lipid transport between organs via the plasma and interstitial fluids. APOE is a core component of plasma lipoproteins and is involved in their production, conversion and clearance. Apolipoproteins are amphipathic molecules that interact both with lipids of the lipoprotein particle core and the aqueous environment of the plasma. As such, APOE associates with chylomicrons, chylomicron remnants, very low density lipoproteins (VLDL) and intermediate density lipoproteins (IDL) but shows a preferential binding to high-density lipoproteins (HDL). It also binds a wide range of cellular receptors including the LDL receptor/LDLR, the LDL receptor-related proteins LRP1, LRP2 and LRP8 and the very low-density lipoprotein receptor/VLDLR that mediate the cellular uptake of the APOE-containing lipoprotein particles. Finally, APOE also has a heparin-binding activity and binds heparan-sulfate proteoglycans on the surface of cells, a property that supports the capture and the receptor-mediated uptake of APOE-containing lipoproteins by cells. A main function of APOE is to mediate lipoprotein clearance through the uptake of chylomicrons, VLDLs, and HDLs by hepatocytes. APOE is also involved in the biosynthesis by the liver of VLDLs as well as their uptake by peripheral tissues ensuring the delivery of triglycerides and energy storage in muscle, heart and adipose tissues. By participating in the lipoprotein-mediated distribution of lipids among tissues, APOE plays a critical role in plasma and tissues lipid homeostasis. APOE is also involved in two steps of reverse cholesterol transport, the HDLs-mediated transport of cholesterol from peripheral tissues to the liver, and thereby plays an important role in cholesterol homeostasis. First, it is functionally associated with ABCA1 in the biogenesis of HDLs in tissues. Second, it is enriched in circulating HDLs and mediates their uptake by hepatocytes. APOE also plays an important role in lipid transport in the central nervous system, regulating neuron survival and sprouting. This Hylobates lar (Lar gibbon) protein is Apolipoprotein E (APOE).